The sequence spans 542 residues: Zinc finger CCHC domain-containing protein 7 (542 aa).

The disordered stretch occupies residues 110–144 (QAQEKTQSPATPRSNKVANKCKRSNKKPEPEESPS). The span at 112-126 (QEKTQSPATPRSNKV) shows a compositional bias: polar residues. Residues K129 and K136 each participate in a glycyl lysine isopeptide (Lys-Gly) (interchain with G-Cter in SUMO2) cross-link. S142 is modified (phosphoserine). Glycyl lysine isopeptide (Lys-Gly) (interchain with G-Cter in SUMO2) cross-links involve residues K236 and K251. 3 CCHC-type zinc fingers span residues 238–255 (VTCR…NCPL), 260–277 (RPCC…GCPA), and 301–318 (KRCD…ACPE). K336 participates in a covalent cross-link: Glycyl lysine isopeptide (Lys-Gly) (interchain with G-Cter in SUMO2). The CCHC-type 4 zinc-finger motif lies at 345 to 362 (VYCYNCAQKGHYGHECTE). Positions 396-542 (LKDIKKNGDF…RKKKPKSSGF (147 aa)) are disordered. Residue K410 forms a Glycyl lysine isopeptide (Lys-Gly) (interchain with G-Cter in SUMO2) linkage. Residues 412-421 (PHGEETDRYH) show a composition bias toward basic and acidic residues. A compositionally biased stretch (basic residues) spans 422–435 (HDRRKSRFSGKRSR). K432 is covalently cross-linked (Glycyl lysine isopeptide (Lys-Gly) (interchain with G-Cter in SUMO2)). The segment covering 436–456 (WPRESKETQKEKTRGREGEKH) has biased composition (basic and acidic residues). A Glycyl lysine isopeptide (Lys-Gly) (interchain with G-Cter in SUMO2) cross-link involves residue K474. Over residues 474-489 (KPNSSSSSNSQKPSKS) the composition is skewed to low complexity. 2 positions are modified to phosphoserine: S478 and S480. Glycyl lysine isopeptide (Lys-Gly) (interchain with G-Cter in SUMO2) cross-links involve residues K485 and K488. Composition is skewed to basic and acidic residues over residues 499-510 (LREEKLRRESMR) and 518-528 (FVEDGSHDDLF). K531 participates in a covalent cross-link: Glycyl lysine isopeptide (Lys-Gly) (interchain with G-Cter in SUMO2). Residues 531–542 (KQRKKKPKSSGF) are compositionally biased toward basic residues.

As to quaternary structure, component of a nucleolar TRAMP-like complex, an ATP-dependent exosome regulatory complex consisting of a helicase (MTREX), an oligadenylate polymerase (TENT4B or TENT4A), and a substrate specific RNA-binding factor (ZCCHC7 or ZCCHC8). Several TRAMP-like complexes exist with specific compositions and are associated with nuclear, or nucleolar RNA exosomes.

The protein resides in the nucleus. It localises to the nucleolus. This chain is Zinc finger CCHC domain-containing protein 7 (Zcchc7), found in Rattus norvegicus (Rat).